The sequence spans 245 residues: MNRTRPLPEIKMVSANKTASILEERTGHRFLNLKRLERALTHSSVQAPARANYERLEFLGDRVLGLTVAEMLFEAFPEASEGELSVRLNALVNAETCAAIADEIGLADLIHTGSDIKSLNDKRLLNVRADVVEALIATIYLDGGLEAARSFIQRYWKKRSLETGAARRDAKTELQEWAHQQGNVHPVYAILSRSGPDHDPLFLVEVTVKGFAPEKGEGRSKRIAEQSAAEAMLYREGVWKRDGSA.

The RNase III domain occupies 19–144; sequence ASILEERTGH…LIATIYLDGG (126 aa). A Mg(2+)-binding site is contributed by glutamate 57. Aspartate 61 is an active-site residue. Mg(2+) is bound by residues aspartate 130 and glutamate 133. Glutamate 133 is an active-site residue. A DRBM domain is found at 169–238; the sequence is DAKTELQEWA…AEAMLYREGV (70 aa).

It belongs to the ribonuclease III family. Homodimer. The cofactor is Mg(2+).

The protein localises to the cytoplasm. The enzyme catalyses Endonucleolytic cleavage to 5'-phosphomonoester.. Functionally, digests double-stranded RNA. Involved in the processing of primary rRNA transcript to yield the immediate precursors to the large and small rRNAs (23S and 16S). Processes some mRNAs, and tRNAs when they are encoded in the rRNA operon. Processes pre-crRNA and tracrRNA of type II CRISPR loci if present in the organism. This is Ribonuclease 3 from Brucella abortus (strain S19).